Reading from the N-terminus, the 519-residue chain is LysM domain-containing protein ARB_03442 (519 aa).

The N-terminal stretch at M1 to A19 is a signal peptide. Residue N47 is glycosylated (N-linked (GlcNAc...) asparagine). The LysM domain maps to K312–V358. The tract at residues Y314–V358 is lysM domain. Low complexity predominate over residues P407–T416. The disordered stretch occupies residues P407–P458. Residues V417 to K433 show a composition bias toward basic and acidic residues. N-linked (GlcNAc...) asparagine glycosylation is present at N460. Positions D467–T510 constitute a Chitin-binding type-1 domain. 4 disulfide bridges follow: C470-C485, C476-C491, C484-C498, and C503-C508.

Its subcellular location is the secreted. Its function is as follows. Might have a role in sequestration of chitin oligosaccharides (breakdown products of fungal cell walls that are released during invasion and act as triggers of host immunity) to dampen host defense. In Arthroderma benhamiae (strain ATCC MYA-4681 / CBS 112371) (Trichophyton mentagrophytes), this protein is LysM domain-containing protein ARB_03442.